The following is a 322-amino-acid chain: Tetraacyldisaccharide 4'-kinase (322 aa).

An ATP-binding site is contributed by C40–T47.

It belongs to the LpxK family.

The catalysed reaction is a lipid A disaccharide + ATP = a lipid IVA + ADP + H(+). It participates in glycolipid biosynthesis; lipid IV(A) biosynthesis; lipid IV(A) from (3R)-3-hydroxytetradecanoyl-[acyl-carrier-protein] and UDP-N-acetyl-alpha-D-glucosamine: step 6/6. Its function is as follows. Transfers the gamma-phosphate of ATP to the 4'-position of a tetraacyldisaccharide 1-phosphate intermediate (termed DS-1-P) to form tetraacyldisaccharide 1,4'-bis-phosphate (lipid IVA). This Koribacter versatilis (strain Ellin345) protein is Tetraacyldisaccharide 4'-kinase.